The chain runs to 228 residues: Eukaryotic translation initiation factor 4E-1 (228 aa).

EIF4G-binding stretches follow at residues H53–E56 and F63–H99. MRNA is bound by residues K71 to G76, K103, and W121 to E122. Residues C126 and C164 are joined by a disulfide bond. Residues Y147–Q156 are EIF4G-binding. Residues R171 to K176 and R216 to R220 contribute to the mRNA site.

This sequence belongs to the eukaryotic initiation factor 4E family. As to quaternary structure, EIF4F is a multi-subunit complex, the composition of which varies with external and internal environmental conditions. It is composed of at least EIF4A, EIF4E and EIF4G. EIF4E is also known to interact with other partners. In higher plants two isoforms of EIF4F have been identified, named isoform EIF4F and isoform EIF(iso)4F. Isoform EIF4F has subunits p220 and p26, whereas isoform EIF(iso)4F has subunits p82 and p28. (Microbial infection) Interacts with potyvirus viral genome-linked protein (VPg); this interaction is possible in susceptible hosts but impaired in resistant plants. In terms of processing, according to the redox status, the Cys-126-Cys-164 disulfide bridge may have a role in regulating protein function by affecting its ability to bind capped mRNA.

Its subcellular location is the nucleus. It is found in the cytoplasm. Component of the protein complex eIF4F, which is involved in the recognition of the mRNA cap, ATP-dependent unwinding of 5'-terminal secondary structure and recruitment of mRNA to the ribosome. Recognizes and binds the 7-methylguanosine-containing mRNA cap during an early step in the initiation of protein synthesis and facilitates ribosome binding by inducing the unwinding of the mRNAs secondary structures. Key component of recessive resistance to potyviruses. Functionally, (Microbial infection) Susceptibility host factor required for viral infection by recruiting viral RNAs to the host ribosomal complex via an interaction with viral genome-linked protein (VPg). Also seems to be involved in virus movement from cell-to-cell. This chain is Eukaryotic translation initiation factor 4E-1, found in Pisum sativum (Garden pea).